Here is a 216-residue protein sequence, read N- to C-terminus: Thiopurine S-methyltransferase (216 aa).

4 residues coordinate S-adenosyl-L-methionine: tryptophan 10, leucine 45, glutamate 66, and arginine 123.

Belongs to the class I-like SAM-binding methyltransferase superfamily. TPMT family.

The protein resides in the cytoplasm. The enzyme catalyses S-adenosyl-L-methionine + a thiopurine = S-adenosyl-L-homocysteine + a thiopurine S-methylether.. The sequence is that of Thiopurine S-methyltransferase from Pseudomonas putida (strain ATCC 700007 / DSM 6899 / JCM 31910 / BCRC 17059 / LMG 24140 / F1).